Consider the following 149-residue polypeptide: Calmodulin, striated muscle (149 aa).

4 consecutive EF-hand domains span residues 8–43 (EQIA…LGQN), 44–79 (PTEA…KMRD), 81–116 (DSEE…LGEK), and 117–149 (LTDE…MTEK). Residues aspartate 21, aspartate 23, aspartate 25, cysteine 27, glutamate 32, aspartate 57, aspartate 59, serine 61, threonine 63, glutamate 68, aspartate 94, aspartate 96, asparagine 98, tyrosine 100, and glutamate 105 each coordinate Ca(2+). N6,N6,N6-trimethyllysine is present on lysine 116. The Ca(2+) site is built by aspartate 130, asparagine 132, aspartate 134, glutamine 136, and glutamate 141.

It belongs to the calmodulin family.

This chain is Calmodulin, striated muscle (CCM1), found in Gallus gallus (Chicken).